Here is a 335-residue protein sequence, read N- to C-terminus: [Citrate [pro-3S]-lyase] ligase (335 aa).

Residues 1-131 (MQFERISTEQ…SATRLQKQCS (131 aa)) form the N-acetyltransferase domain.

It catalyses the reaction holo-[citrate lyase ACP] + acetate + ATP = acetyl-[citrate lyase ACP] + AMP + diphosphate. Functionally, acetylation of prosthetic group (2-(5''-phosphoribosyl)-3'-dephosphocoenzyme-A) of the gamma subunit of citrate lyase. The sequence is that of [Citrate [pro-3S]-lyase] ligase (citC) from Haemophilus influenzae (strain ATCC 51907 / DSM 11121 / KW20 / Rd).